A 468-amino-acid chain; its full sequence is 3-isopropylmalate dehydratase large subunit (468 aa).

Cys347, Cys407, and Cys410 together coordinate [4Fe-4S] cluster.

The protein belongs to the aconitase/IPM isomerase family. LeuC type 1 subfamily. Heterodimer of LeuC and LeuD. The cofactor is [4Fe-4S] cluster.

The enzyme catalyses (2R,3S)-3-isopropylmalate = (2S)-2-isopropylmalate. Its pathway is amino-acid biosynthesis; L-leucine biosynthesis; L-leucine from 3-methyl-2-oxobutanoate: step 2/4. Functionally, catalyzes the isomerization between 2-isopropylmalate and 3-isopropylmalate, via the formation of 2-isopropylmaleate. This chain is 3-isopropylmalate dehydratase large subunit, found in Synechococcus elongatus (strain ATCC 33912 / PCC 7942 / FACHB-805) (Anacystis nidulans R2).